The primary structure comprises 365 residues: Chorismate synthase (365 aa).

The NADP(+) site is built by arginine 48 and arginine 54. FMN contacts are provided by residues 125–127 (RSS), 238–239 (NA), glycine 278, 293–297 (KPTSS), and arginine 319.

It belongs to the chorismate synthase family. In terms of assembly, homotetramer. Requires FMNH2 as cofactor.

The catalysed reaction is 5-O-(1-carboxyvinyl)-3-phosphoshikimate = chorismate + phosphate. Its pathway is metabolic intermediate biosynthesis; chorismate biosynthesis; chorismate from D-erythrose 4-phosphate and phosphoenolpyruvate: step 7/7. Catalyzes the anti-1,4-elimination of the C-3 phosphate and the C-6 proR hydrogen from 5-enolpyruvylshikimate-3-phosphate (EPSP) to yield chorismate, which is the branch point compound that serves as the starting substrate for the three terminal pathways of aromatic amino acid biosynthesis. This reaction introduces a second double bond into the aromatic ring system. The sequence is that of Chorismate synthase from Vesicomyosocius okutanii subsp. Calyptogena okutanii (strain HA).